The following is a 341-amino-acid chain: Cysteine and histidine-rich domain-containing protein 1 (341 aa).

16 residues coordinate Zn(2+): C5, C10, C24, H27, C42, C43, C59, H64, C155, C160, C174, H177, C192, C193, C209, and H214. CHORD domains follow at residues 5-64 (CYNK…KGPH) and 155-214 (CKNG…RGKH). The tract at residues 61–81 (KGPHNQEKPAEPVKPEVKSSL) is disordered. Residues 64–81 (HNQEKPAEPVKPEVKSSL) show a composition bias toward basic and acidic residues. The CS domain occupies 225-314 (VVPCRFDWHQ…AEPMSWARLD (90 aa)). Positions 313 to 341 (LDLPPVAPPKEKEKEKDVDSEDECDDDED) are disordered. Residues 330–341 (VDSEDECDDDED) show a composition bias toward acidic residues.

Regulates centrosome duplication. The chain is Cysteine and histidine-rich domain-containing protein 1 (chordc1) from Danio rerio (Zebrafish).